A 134-amino-acid polypeptide reads, in one-letter code: ATP synthase epsilon chain (134 aa).

The protein belongs to the ATPase epsilon chain family. F-type ATPases have 2 components, CF(1) - the catalytic core - and CF(0) - the membrane proton channel. CF(1) has five subunits: alpha(3), beta(3), gamma(1), delta(1), epsilon(1). CF(0) has three main subunits: a, b and c.

It is found in the cell membrane. Functionally, produces ATP from ADP in the presence of a proton gradient across the membrane. The chain is ATP synthase epsilon chain from Ruminococcus albus (strain ATCC 27210 / DSM 20455 / JCM 14654 / NCDO 2250 / 7).